A 206-amino-acid polypeptide reads, in one-letter code: Small ribosomal subunit protein uS4 (206 aa).

The S4 RNA-binding domain maps to 96–156 (QRLDNVVYRM…EKAKKQARIV (61 aa)).

It belongs to the universal ribosomal protein uS4 family. Part of the 30S ribosomal subunit. Contacts protein S5. The interaction surface between S4 and S5 is involved in control of translational fidelity.

In terms of biological role, one of the primary rRNA binding proteins, it binds directly to 16S rRNA where it nucleates assembly of the body of the 30S subunit. Functionally, with S5 and S12 plays an important role in translational accuracy. The chain is Small ribosomal subunit protein uS4 from Alteromonas mediterranea (strain DSM 17117 / CIP 110805 / LMG 28347 / Deep ecotype).